The following is a 419-amino-acid chain: Multifunctional CCA protein (419 aa).

ATP is bound by residues G8 and R11. The CTP site is built by G8 and R11. Mg(2+)-binding residues include D21 and D23. 3 residues coordinate ATP: R91, R137, and R140. Residues R91, R137, and R140 each coordinate CTP. The 107-residue stretch at S228–W334 folds into the HD domain.

This sequence belongs to the tRNA nucleotidyltransferase/poly(A) polymerase family. Bacterial CCA-adding enzyme type 1 subfamily. As to quaternary structure, monomer. Can also form homodimers and oligomers. Mg(2+) serves as cofactor. Requires Ni(2+) as cofactor.

It catalyses the reaction a tRNA precursor + 2 CTP + ATP = a tRNA with a 3' CCA end + 3 diphosphate. It carries out the reaction a tRNA with a 3' CCA end + 2 CTP + ATP = a tRNA with a 3' CCACCA end + 3 diphosphate. Functionally, catalyzes the addition and repair of the essential 3'-terminal CCA sequence in tRNAs without using a nucleic acid template. Adds these three nucleotides in the order of C, C, and A to the tRNA nucleotide-73, using CTP and ATP as substrates and producing inorganic pyrophosphate. tRNA 3'-terminal CCA addition is required both for tRNA processing and repair. Also involved in tRNA surveillance by mediating tandem CCA addition to generate a CCACCA at the 3' terminus of unstable tRNAs. While stable tRNAs receive only 3'-terminal CCA, unstable tRNAs are marked with CCACCA and rapidly degraded. The polypeptide is Multifunctional CCA protein (Mannheimia succiniciproducens (strain KCTC 0769BP / MBEL55E)).